A 335-amino-acid polypeptide reads, in one-letter code: Legumin type B (335 aa).

Disordered regions lie at residues 47–87 (PETQ…GNSV) and 102–155 (TEED…GRNG). The segment covering 105-118 (DTAKRLRSPRDKRN) has biased composition (basic and acidic residues). Residues 135–144 (QQEEEEEEEE) show a composition bias toward acidic residues. A Cupin type-1 domain is found at 167–314 (ENIAQPARAD…AFGLRQRQVT (148 aa)).

It belongs to the 11S seed storage protein (globulins) family. As to quaternary structure, hexamer; each subunit is composed of an acidic and a basic chain derived from a single precursor and linked by a disulfide bond.

This protein found in the seeds of many leguminous and non-leguminous plants is the source of sulfur-containing amino acids in seed meals. The protein is Legumin type B (LEB2) of Vicia faba (Broad bean).